Consider the following 1132-residue polypeptide: Telomerase reverse transcriptase (1132 aa).

The RNA-interacting domain 1 stretch occupies residues 1–230 (MPRAPRCRAV…ARRRGGSASR (230 aa)). Residues 58-197 (VPWDARPPPA…PHASGPRRRL (140 aa)) form a GQ motif region. Positions 137–141 (WGLLL) are required for regulating specificity for telomeric DNA and for processivity for primer elongation. A disordered region spans residues 210–320 (AGVPLGLPAP…SRPPRPWDTP (111 aa)). Residues 213–234 (PLGLPAPGARRRGGSASRSLPL) show a composition bias toward low complexity. A Bipartite nuclear localization signal motif is present at residues 222–240 (RRRGGSASRSLPLPKRPRR). Ser-227 carries the post-translational modification Phosphoserine; by PKB/AKT1. A linker region spans residues 231–324 (SLPLPKRPRR…RPWDTPCPPV (94 aa)). Over residues 293-304 (RHSHPSVGRQHH) the composition is skewed to basic residues. The tract at residues 301–538 (RQHHAGPPST…VPAAEHRLRE (238 aa)) is required for oligomerization. The segment covering 310 to 320 (TSRPPRPWDTP) has biased composition (pro residues). The interval 325-550 (YAETKHFLYS…LAKFLHWLMS (226 aa)) is RNA-interacting domain 2. A TFLY; involved in RNA binding motif is present at residues 328–333 (TKHFLY). Positions 376–521 (PRRLPRLPQR…MSVRDCAWLR (146 aa)) are QFP motif. The tract at residues 397–417 (LGNHAQCPYGVLLKTHCPLRA) is CP motif. Ser-457 carries the post-translational modification Phosphoserine; by DYRK2. The Reverse transcriptase domain maps to 605–935 (EVRQHREARP…GLFPWCGLLL (331 aa)). A Phosphotyrosine; by SRC-type Tyr-kinases modification is found at Tyr-707. Asp-712, Asp-868, and Asp-869 together coordinate Mg(2+). Residues 914-928 (LGGTAFVQMPAHGLF) form a required for oligomerization region. Residues 930-934 (WCGLL) are primer grip sequence. The tract at residues 936–1132 (DTRTLEVQSD…LPSDFKTILD (197 aa)) is CTE.

This sequence belongs to the reverse transcriptase family. Telomerase subfamily. As to quaternary structure, catalytic component of the telomerase holoenzyme complex composed of one molecule of TERT, one molecule of WRAP53/TCAB1, two molecules of H/ACA ribonucleoprotein complex subunits DKC1, NOP10, NHP2 and GAR1, and a telomerase RNA template component (TERC). The telomerase holoenzyme complex is associated with TEP1, SMG6/EST1A and POT1. The molecular chaperone HSP90/P23 complex is required for correct assembly and stabilization of the active telomerase. Interacts directly with HSP90A and PTGES3. Interacts with HSPA1A; the interaction occurs in the absence of TERC and dissociates once the complex has formed. Interacts with RAN; the interaction promotes nuclear export of TERT. Interacts with XPO1. Interacts with PTPN11; the interaction retains TERT in the nucleus. Interacts with NCL (via RRM1 and C-terminal RRM4/Arg/Gly-rich domains); the interaction is important for nucleolar localization of TERT. Interacts with SMARCA4 (via the bromodomain); the interaction regulates Wnt-mediated signaling. Interacts with MCRS1 (isoform MCRS2); the interaction inhibits in vitro telomerase activity. Interacts with PIF1; the interaction has no effect on the elongation activity of TERT. Interacts with PML; the interaction recruits TERT to PML bodies and inhibits telomerase activity. Interacts with GNL3L. Interacts with isoform 1 and isoform 2 of NVL. Interacts with DHX36. Interacts with ATF7. Phosphorylation at Tyr-707 under oxidative stress leads to translocation of TERT to the cytoplasm and reduces its antiapoptotic activity. Dephosphorylated by SHP2/PTPN11 leading to nuclear retention. Phosphorylation at Ser-227 by the AKT pathway promotes nuclear location. Phosphorylation at the G2/M phase at Ser-457 by DYRK2 promotes ubiquitination by the EDVP complex and degradation. Post-translationally, ubiquitinated by the EDVP complex, a E3 ligase complex following phosphorylation at Ser-457 by DYRK2. Ubiquitinated leads to proteasomal degradation. In terms of processing, (Microbial infection) In case of infection by HIV-1, the EDVP complex is hijacked by HIV-1 via interaction between HIV-1 Vpr and DCAF1/VPRBP, leading to ubiquitination and degradation. As to expression, expressed at a high level in thymocyte subpopulations, at an intermediate level in tonsil T-lymphocytes, and at a low to undetectable level in peripheral blood T-lymphocytes.

It localises to the nucleus. The protein resides in the nucleolus. The protein localises to the nucleoplasm. It is found in the chromosome. Its subcellular location is the telomere. It localises to the cytoplasm. The protein resides in the PML body. It catalyses the reaction DNA(n) + a 2'-deoxyribonucleoside 5'-triphosphate = DNA(n+1) + diphosphate. Functionally, telomerase is a ribonucleoprotein enzyme essential for the replication of chromosome termini in most eukaryotes. Active in progenitor and cancer cells. Inactive, or very low activity, in normal somatic cells. Catalytic component of the teleromerase holoenzyme complex whose main activity is the elongation of telomeres by acting as a reverse transcriptase that adds simple sequence repeats to chromosome ends by copying a template sequence within the RNA component of the enzyme. Catalyzes the RNA-dependent extension of 3'-chromosomal termini with the 6-nucleotide telomeric repeat unit, 5'-TTAGGG-3'. The catalytic cycle involves primer binding, primer extension and release of product once the template boundary has been reached or nascent product translocation followed by further extension. More active on substrates containing 2 or 3 telomeric repeats. Telomerase activity is regulated by a number of factors including telomerase complex-associated proteins, chaperones and polypeptide modifiers. Modulates Wnt signaling. Plays important roles in aging and antiapoptosis. This chain is Telomerase reverse transcriptase (TERT), found in Homo sapiens (Human).